The primary structure comprises 454 residues: UDP-N-acetylmuramate--L-alanine ligase (454 aa).

112–118 (GTHGKTT) is a binding site for ATP.

It belongs to the MurCDEF family.

The protein localises to the cytoplasm. The catalysed reaction is UDP-N-acetyl-alpha-D-muramate + L-alanine + ATP = UDP-N-acetyl-alpha-D-muramoyl-L-alanine + ADP + phosphate + H(+). The protein operates within cell wall biogenesis; peptidoglycan biosynthesis. Cell wall formation. The sequence is that of UDP-N-acetylmuramate--L-alanine ligase from Oleidesulfovibrio alaskensis (strain ATCC BAA-1058 / DSM 17464 / G20) (Desulfovibrio alaskensis).